Consider the following 212-residue polypeptide: Protein-L-isoaspartate O-methyltransferase (212 aa).

Ser60 is an active-site residue.

The protein belongs to the methyltransferase superfamily. L-isoaspartyl/D-aspartyl protein methyltransferase family.

It localises to the cytoplasm. It catalyses the reaction [protein]-L-isoaspartate + S-adenosyl-L-methionine = [protein]-L-isoaspartate alpha-methyl ester + S-adenosyl-L-homocysteine. Catalyzes the methyl esterification of L-isoaspartyl residues in peptides and proteins that result from spontaneous decomposition of normal L-aspartyl and L-asparaginyl residues. It plays a role in the repair and/or degradation of damaged proteins. The polypeptide is Protein-L-isoaspartate O-methyltransferase (Methanococcus maripaludis (strain DSM 14266 / JCM 13030 / NBRC 101832 / S2 / LL)).